The following is a 249-amino-acid chain: Type III pantothenate kinase (249 aa).

An ATP-binding site is contributed by 6-13 (DCGNSFIK). Substrate-binding positions include Y93 and 100–103 (GMDR). Residue D102 is the Proton acceptor of the active site. Residue D122 participates in K(+) binding. An ATP-binding site is contributed by T125. Residue T181 coordinates substrate.

This sequence belongs to the type III pantothenate kinase family. Homodimer. Requires NH4(+) as cofactor. It depends on K(+) as a cofactor.

It is found in the cytoplasm. The catalysed reaction is (R)-pantothenate + ATP = (R)-4'-phosphopantothenate + ADP + H(+). Its pathway is cofactor biosynthesis; coenzyme A biosynthesis; CoA from (R)-pantothenate: step 1/5. In terms of biological role, catalyzes the phosphorylation of pantothenate (Pan), the first step in CoA biosynthesis. This Pseudomonas putida (strain ATCC 700007 / DSM 6899 / JCM 31910 / BCRC 17059 / LMG 24140 / F1) protein is Type III pantothenate kinase.